The primary structure comprises 164 residues: FMN reductase (NADH) RutF (164 aa).

It belongs to the non-flavoprotein flavin reductase family. RutF subfamily.

It carries out the reaction FMNH2 + NAD(+) = FMN + NADH + 2 H(+). Catalyzes the reduction of FMN to FMNH2 which is used to reduce pyrimidine by RutA via the Rut pathway. The protein is FMN reductase (NADH) RutF of Escherichia coli O45:K1 (strain S88 / ExPEC).